A 169-amino-acid polypeptide reads, in one-letter code: Phosphopantetheine adenylyltransferase (169 aa).

Residue Ser-10 participates in substrate binding. Residues 10–11 (SF) and His-18 contribute to the ATP site. Substrate-binding residues include Lys-42, Thr-79, and Arg-93. Residues 94 to 96 (GLR), Glu-104, and 129 to 135 (VRPITAT) each bind ATP.

Belongs to the bacterial CoaD family. As to quaternary structure, homohexamer. Mg(2+) is required as a cofactor.

The protein resides in the cytoplasm. It carries out the reaction (R)-4'-phosphopantetheine + ATP + H(+) = 3'-dephospho-CoA + diphosphate. It participates in cofactor biosynthesis; coenzyme A biosynthesis; CoA from (R)-pantothenate: step 4/5. In terms of biological role, reversibly transfers an adenylyl group from ATP to 4'-phosphopantetheine, yielding dephospho-CoA (dPCoA) and pyrophosphate. The sequence is that of Phosphopantetheine adenylyltransferase from Rhodopseudomonas palustris (strain TIE-1).